The sequence spans 351 residues: Peptide chain release factor 1 (351 aa).

An N5-methylglutamine modification is found at Gln229. The disordered stretch occupies residues Ala279–Ile300.

Belongs to the prokaryotic/mitochondrial release factor family. In terms of processing, methylated by PrmC. Methylation increases the termination efficiency of RF1.

Its subcellular location is the cytoplasm. In terms of biological role, peptide chain release factor 1 directs the termination of translation in response to the peptide chain termination codons UAG and UAA. The sequence is that of Peptide chain release factor 1 from Paracoccus denitrificans (strain Pd 1222).